A 401-amino-acid polypeptide reads, in one-letter code: Glycerol-3-phosphate dehydrogenase [NAD(+)] 1 (401 aa).

NAD(+) is bound by residues 40–45 (GSGNWG), Phe128, Lys151, and Ala184. Substrate is bound at residue Lys151. Lys244 acts as the Proton acceptor in catalysis. Positions 309 and 338 each coordinate NAD(+). Position 309–310 (309–310 (RN)) interacts with substrate.

It belongs to the NAD-dependent glycerol-3-phosphate dehydrogenase family.

Its subcellular location is the cytoplasm. The catalysed reaction is sn-glycerol 3-phosphate + NAD(+) = dihydroxyacetone phosphate + NADH + H(+). This Zygosaccharomyces rouxii protein is Glycerol-3-phosphate dehydrogenase [NAD(+)] 1 (GPD1).